Here is a 178-residue protein sequence, read N- to C-terminus: Large ribosomal subunit protein uL6 (178 aa).

The protein belongs to the universal ribosomal protein uL6 family. In terms of assembly, part of the 50S ribosomal subunit.

Its function is as follows. This protein binds to the 23S rRNA, and is important in its secondary structure. It is located near the subunit interface in the base of the L7/L12 stalk, and near the tRNA binding site of the peptidyltransferase center. This chain is Large ribosomal subunit protein uL6, found in Helicobacter acinonychis (strain Sheeba).